The chain runs to 378 residues: Dual-specificity RNA methyltransferase RlmN (378 aa).

The active-site Proton acceptor is Glu97. The Radical SAM core domain occupies 103–341 (EGDRATLCVS…VMVRKTRGDD (239 aa)). Residues Cys110 and Cys346 are joined by a disulfide bond. Cys117, Cys121, and Cys124 together coordinate [4Fe-4S] cluster. Residues 171-172 (GE), Ser203, 225-227 (SLH), and Asn303 contribute to the S-adenosyl-L-methionine site. Cys346 serves as the catalytic S-methylcysteine intermediate.

This sequence belongs to the radical SAM superfamily. RlmN family. [4Fe-4S] cluster serves as cofactor.

Its subcellular location is the cytoplasm. It catalyses the reaction adenosine(2503) in 23S rRNA + 2 reduced [2Fe-2S]-[ferredoxin] + 2 S-adenosyl-L-methionine = 2-methyladenosine(2503) in 23S rRNA + 5'-deoxyadenosine + L-methionine + 2 oxidized [2Fe-2S]-[ferredoxin] + S-adenosyl-L-homocysteine. The enzyme catalyses adenosine(37) in tRNA + 2 reduced [2Fe-2S]-[ferredoxin] + 2 S-adenosyl-L-methionine = 2-methyladenosine(37) in tRNA + 5'-deoxyadenosine + L-methionine + 2 oxidized [2Fe-2S]-[ferredoxin] + S-adenosyl-L-homocysteine. Specifically methylates position 2 of adenine 2503 in 23S rRNA and position 2 of adenine 37 in tRNAs. m2A2503 modification seems to play a crucial role in the proofreading step occurring at the peptidyl transferase center and thus would serve to optimize ribosomal fidelity. The protein is Dual-specificity RNA methyltransferase RlmN of Idiomarina loihiensis (strain ATCC BAA-735 / DSM 15497 / L2-TR).